The sequence spans 477 residues: 2-(3-amino-3-carboxypropyl)histidine synthase subunit 2 (477 aa).

Cys88, Cys109, and Cys328 together coordinate [4Fe-4S] cluster.

Belongs to the DPH1/DPH2 family. DPH2 subfamily. In terms of assembly, component of the 2-(3-amino-3-carboxypropyl)histidine synthase complex composed of DPH1, DPH2, DPH3 and a NADH-dependent reductase. [4Fe-4S] cluster is required as a cofactor.

The protein operates within protein modification; peptidyl-diphthamide biosynthesis. Functionally, required for the first step of diphthamide biosynthesis, a post-translational modification of histidine which occurs in elongation factor 2. DPH1 and DPH2 transfer a 3-amino-3-carboxypropyl (ACP) group from S-adenosyl-L-methionine (SAM) to a histidine residue, the reaction is assisted by a reduction system comprising DPH3 and a NADH-dependent reductase. Facilitates the reduction of the catalytic iron-sulfur cluster found in the DPH1 subunit. The sequence is that of 2-(3-amino-3-carboxypropyl)histidine synthase subunit 2 (DPH2) from Gallus gallus (Chicken).